A 99-amino-acid polypeptide reads, in one-letter code: Regulatory protein FanB (99 aa).

Functionally, trans-acting protein involved in the regulation of the biogenesis of K99 fimbriae (FanC). The sequence is that of Regulatory protein FanB (fanB) from Escherichia coli.